The primary structure comprises 343 residues: Tribbles homolog 2 (343 aa).

Positions 25–50 (EELSSIRSAEPSQSFSPNLGSPSPPE) are disordered. A compositionally biased stretch (polar residues) spans 29–45 (SIRSAEPSQSFSPNLGS). A Protein kinase domain is found at 61–308 (IGKYLLLEPL…SQEILDHPWF (248 aa)).

This sequence belongs to the protein kinase superfamily. CAMK Ser/Thr protein kinase family. Tribbles subfamily.

Its subcellular location is the cytoplasm. It localises to the cytoskeleton. Interacts with MAPK kinases and regulates activation of MAP kinases. Does not display kinase activity. This Mus musculus (Mouse) protein is Tribbles homolog 2.